Reading from the N-terminus, the 424-residue chain is Adenylosuccinate synthetase (424 aa).

GTP is bound by residues 12–18 and 40–42; these read GDEGKGK and GHT. The active-site Proton acceptor is Asp13. Asp13 and Gly40 together coordinate Mg(2+). Residues 13 to 16, 38 to 41, Thr130, Arg144, Asn220, Thr235, and Arg299 each bind IMP; these read DEGK and NAGH. His41 acts as the Proton donor in catalysis. Residue 295 to 301 participates in substrate binding; sequence VTTGRRR. Residues Arg301, 327–329, and 412–414 contribute to the GTP site; these read KLD and GTG.

It belongs to the adenylosuccinate synthetase family. As to quaternary structure, homodimer. Requires Mg(2+) as cofactor.

The protein resides in the cytoplasm. It carries out the reaction IMP + L-aspartate + GTP = N(6)-(1,2-dicarboxyethyl)-AMP + GDP + phosphate + 2 H(+). It participates in purine metabolism; AMP biosynthesis via de novo pathway; AMP from IMP: step 1/2. Plays an important role in the de novo pathway and in the salvage pathway of purine nucleotide biosynthesis. Catalyzes the first committed step in the biosynthesis of AMP from IMP. This Aspergillus flavus (strain ATCC 200026 / FGSC A1120 / IAM 13836 / NRRL 3357 / JCM 12722 / SRRC 167) protein is Adenylosuccinate synthetase.